The primary structure comprises 502 residues: MSLVLLSLAALCRSAVPREPTVQCGSETGPSPEWMLQHDLIPGDLRDLRVEPVTTSVATGDYSILMNVSWVLRADASIRLLKATKICVTGKSNFQSYSCVRCNYTEAFQTQTRPSGGKWTFSYIGFPVELNTVYFIGAHNIPNANMNEDGPSMSVNFTSPGCLDHIMKYKKKCVKAGSLWDPNITACKKNEETVEVNFTTTPLGNRYMALIQHSTIIGFSQVFEPHQKKQTRASVVIPVTGDSEGATVQLTPYFPTCGSDCIRHKGTVVLCPQTGVPFPLDNNKSKPGGWLPLLLLSLLVATWVLVAGIYLMWRHERIKKTSFSTTTLLPPIKVLVVYPSEICFHHTICYFTEFLQNHCRSEVILEKWQKKKIAEMGPVQWLATQKKAADKVVFLLSNDVNSVCDGTCGKSEGSPSENSQDLFPLAFNLFCSDLRSQIHLHKYVVVYFREIDTKDDYNALSVCPKYHLMKDATAFCAELLHVKQQVSAGKRSQACHDGCCSL.

Residues 1-17 (MSLVLLSLAALCRSAVP) form the signal peptide. Over 18-292 (REPTVQCGSE…NKSKPGGWLP (275 aa)) the chain is Extracellular. N-linked (GlcNAc...) asparagine glycosylation is found at N67, N103, N156, N183, N197, and N283. The chain crosses the membrane as a helical span at residues 293–313 (LLLLSLLVATWVLVAGIYLMW). At 314 to 502 (RHERIKKTSF…QACHDGCCSL (189 aa)) the chain is on the cytoplasmic side. The region spanning 331 to 477 (PIKVLVVYPS…LMKDATAFCA (147 aa)) is the SEFIR domain.

In terms of assembly, interacts with DAZAP2. Interacts with TRAF3IP2. As to expression, expressed in several endocrine tissues, mostly in fetal and adult liver, kidney, pancreas, testis, colon, brain and small intestine; not detected in peripheral blood leukocytes, lymphoid organs, and most cell lines.

The protein resides in the cell membrane. It is found in the secreted. Functionally, receptor for the pro-inflammatory cytokines IL17B and IL17E. May play a role in controlling the growth and/or differentiation of hematopoietic cells. This chain is Interleukin-17 receptor B (IL17RB), found in Homo sapiens (Human).